The following is a 259-amino-acid chain: Deoxyribose-phosphate aldolase (259 aa).

Catalysis depends on Asp-102, which acts as the Proton donor/acceptor. Residue Lys-167 is the Schiff-base intermediate with acetaldehyde of the active site. Lys-201 acts as the Proton donor/acceptor in catalysis.

Belongs to the DeoC/FbaB aldolase family. DeoC type 2 subfamily.

The protein resides in the cytoplasm. The catalysed reaction is 2-deoxy-D-ribose 5-phosphate = D-glyceraldehyde 3-phosphate + acetaldehyde. The protein operates within carbohydrate degradation; 2-deoxy-D-ribose 1-phosphate degradation; D-glyceraldehyde 3-phosphate and acetaldehyde from 2-deoxy-alpha-D-ribose 1-phosphate: step 2/2. Functionally, catalyzes a reversible aldol reaction between acetaldehyde and D-glyceraldehyde 3-phosphate to generate 2-deoxy-D-ribose 5-phosphate. The chain is Deoxyribose-phosphate aldolase from Shigella boydii serotype 4 (strain Sb227).